We begin with the raw amino-acid sequence, 699 residues long: Kinesin-like protein KIF3A (699 aa).

Positions 14–345 (NVKVVVRCRP…LRYANRAKNI (332 aa)) constitute a Kinesin motor domain. ATP is bound at residue 100 to 107 (GQTGTGKT). Residues 355–590 (PKDALLRQFQ…LSRELRLQML (236 aa)) adopt a coiled-coil conformation. 2 disordered regions span residues 372–421 (KKLE…KMIE) and 663–699 (SLMK…SLLQ). The span at 376–400 (EGEEISGSDISGSEEDDDEEGEVGE) shows a compositional bias: acidic residues. Over residues 672 to 687 (TSKGKARPKTGRRKRS) the composition is skewed to basic residues. Ser-687 bears the Phosphoserine mark. The globular stretch occupies residues 697-699 (LLQ).

Belongs to the TRAFAC class myosin-kinesin ATPase superfamily. Kinesin family. Kinesin II subfamily. Heterodimer of KIF3A and KIF3B. Interacts with CIMAP3. Interacts with CLN3. Interacts with DCTN1. Interacts with FLCN. Interacts with AP3B1.

It is found in the cytoplasm. It localises to the cytoskeleton. The protein localises to the cell projection. The protein resides in the cilium. Its subcellular location is the microtubule organizing center. It is found in the centrosome. It localises to the centriole. Its function is as follows. Microtubule-based anterograde translocator for membranous organelles. Plus end-directed microtubule sliding activity in vitro. Plays a role in primary cilia formation. Plays a role in centriole cohesion and subdistal appendage organization and function. Regulates the formation of the subdistal appendage via recruitment of DCTN1 to the centriole. Also required for ciliary basal feet formation and microtubule anchoring to mother centriole. This Homo sapiens (Human) protein is Kinesin-like protein KIF3A (KIF3A).